The following is a 498-amino-acid chain: Early growth response protein 1 (498 aa).

Disordered regions lie at residues 137–203 and 287–308; these read NASP…TASI and PSRMRKYPNRPSKTPPHERPYA. The segment covering 139–163 has biased composition (low complexity); that stretch reads SPSSAPSSSPSSSSSSSQSPPLSCS. The span at 179 to 202 shows a compositional bias: polar residues; the sequence is FPNSSPELFPDQSPQPFQNASTAS. 3 consecutive C2H2-type zinc fingers follow at residues 307–331, 337–359, and 365–387; these read YACPVESCDRRFSRSDELTRHIRIH, FQCRICMRNFSRSDHLTTHIRTH, and FACDICGRKFARSDERKRHTKIH. The disordered stretch occupies residues 378–422; the sequence is DERKRHTKIHLRQKDKKADKATPVSVASPVSSYSPSASTSYPSPV. Residues 382 to 392 are compositionally biased toward basic residues; the sequence is RHTKIHLRQKD. Positions 398–422 are enriched in low complexity; sequence ATPVSVASPVSSYSPSASTSYPSPV.

This sequence belongs to the EGR C2H2-type zinc-finger protein family.

It localises to the nucleus. Its subcellular location is the cytoplasm. Functionally, transcriptional regulator. Recognizes and binds to the DNA sequence 5'-GCG(T/G)GGGCG-3'(EGR-site) in the promoter region of target genes. Binds double-stranded target DNA, irrespective of the cytosine methylation status. Regulates the transcription of numerous target genes, and thereby plays an important role in regulating the response to growth factors, DNA damage, and ischemia. Plays a role in the regulation of cell survival, proliferation and cell death. Mediates responses to ischemia and hypoxia; regulates the expression of proteins that are involved in inflammatory processes. Plays a role in regulating the expression of circadian clock genes. The polypeptide is Early growth response protein 1 (Xenopus tropicalis (Western clawed frog)).